The primary structure comprises 871 residues: Protein arg-6, mitochondrial (871 aa).

Residues 1-44 constitute a mitochondrion transit peptide; that stretch reads MYSACAVALRAGARRVVRRVPKSARALPRAAAARRQISTTAARS. The N-acetyltransferase domain occupies 336 to 488; the sequence is QASTSLSEFK…DFTENGRAML (153 aa). Residue Cys-689 is part of the active site.

The protein in the N-terminal section; belongs to the acetylglutamate kinase family. This sequence in the C-terminal section; belongs to the NAGSA dehydrogenase family. Post-translationally, the protein precursor is cleaved into the two biologically active enzymes, the kinase and the reductase.

Its subcellular location is the mitochondrion. The enzyme catalyses N-acetyl-L-glutamate 5-semialdehyde + phosphate + NADP(+) = N-acetyl-L-glutamyl 5-phosphate + NADPH + H(+). It carries out the reaction N-acetyl-L-glutamate + ATP = N-acetyl-L-glutamyl 5-phosphate + ADP. The protein operates within amino-acid biosynthesis; L-arginine biosynthesis; N(2)-acetyl-L-ornithine from L-glutamate: step 2/4. It functions in the pathway amino-acid biosynthesis; L-arginine biosynthesis; N(2)-acetyl-L-ornithine from L-glutamate: step 3/4. The protein is Protein arg-6, mitochondrial (arg-6) of Neurospora crassa (strain ATCC 24698 / 74-OR23-1A / CBS 708.71 / DSM 1257 / FGSC 987).